The sequence spans 282 residues: Bis(5'-nucleosyl)-tetraphosphatase, symmetrical (282 aa).

The protein belongs to the Ap4A hydrolase family.

It catalyses the reaction P(1),P(4)-bis(5'-adenosyl) tetraphosphate + H2O = 2 ADP + 2 H(+). In terms of biological role, hydrolyzes diadenosine 5',5'''-P1,P4-tetraphosphate to yield ADP. The protein is Bis(5'-nucleosyl)-tetraphosphatase, symmetrical of Burkholderia mallei (strain NCTC 10247).